The chain runs to 292 residues: Ribosomal RNA small subunit methyltransferase A (292 aa).

Positions 29, 31, 56, 77, 102, and 127 each coordinate S-adenosyl-L-methionine.

The protein belongs to the class I-like SAM-binding methyltransferase superfamily. rRNA adenine N(6)-methyltransferase family. RsmA subfamily.

It is found in the cytoplasm. It carries out the reaction adenosine(1518)/adenosine(1519) in 16S rRNA + 4 S-adenosyl-L-methionine = N(6)-dimethyladenosine(1518)/N(6)-dimethyladenosine(1519) in 16S rRNA + 4 S-adenosyl-L-homocysteine + 4 H(+). Functionally, specifically dimethylates two adjacent adenosines (A1518 and A1519) in the loop of a conserved hairpin near the 3'-end of 16S rRNA in the 30S particle. May play a critical role in biogenesis of 30S subunits. The protein is Ribosomal RNA small subunit methyltransferase A of Bacillus pumilus (strain SAFR-032).